The sequence spans 365 residues: Class I histocompatibility antigen, Gogo-A*0401 alpha chain (365 aa).

A signal peptide spans 1–24; it reads MAVMAPRTLVLLLSGALALTQTWA. Residues 25-114 form an alpha-1 region; that stretch reads GSHSMRYFYT…LRGYYNQSED (90 aa). The Extracellular portion of the chain corresponds to 25–308; that stretch reads GSHSMRYFYT…EPSSQPTIPI (284 aa). N-linked (GlcNAc...) asparagine glycosylation is present at asparagine 110. Residues 115–206 are alpha-2; that stretch reads GSHTIQRMYG…ENGKETLQLT (92 aa). 2 disulfide bridges follow: cysteine 125/cysteine 188 and cysteine 227/cysteine 283. An alpha-3 region spans residues 207-298; it reads DAPKTHMTHH…GLPKPLTLRW (92 aa). In terms of domain architecture, Ig-like C1-type spans 209–295; that stretch reads PKTHMTHHPV…QHEGLPKPLT (87 aa). The connecting peptide stretch occupies residues 299-308; the sequence is EPSSQPTIPI. The chain crosses the membrane as a helical span at residues 309 to 332; it reads VGIIAGLVLFGAVIAGAVVAAVRW. The Cytoplasmic segment spans residues 333–365; it reads RRKSSDRKGGSYSQAASSDSAQGSDVSLTACKV. Positions 338–365 are disordered; it reads DRKGGSYSQAASSDSAQGSDVSLTACKV. A compositionally biased stretch (low complexity) spans 342-359; sequence GSYSQAASSDSAQGSDVS. At serine 343 the chain carries Phosphoserine. Residue tyrosine 344 is modified to Phosphotyrosine. 6 positions are modified to phosphoserine: serine 345, serine 349, serine 350, serine 352, serine 356, and serine 359.

The protein belongs to the MHC class I family. As to quaternary structure, heterodimer of an alpha chain and a beta chain (beta-2-microglobulin).

It is found in the membrane. Its function is as follows. Involved in the presentation of foreign antigens to the immune system. The sequence is that of Class I histocompatibility antigen, Gogo-A*0401 alpha chain from Gorilla gorilla gorilla (Western lowland gorilla).